A 932-amino-acid chain; its full sequence is Protocadherin gamma-A9 (932 aa).

An N-terminal signal peptide occupies residues 1–28 (MAAPTKCQLRGRLVLLCSLLGMLWEARA). Cadherin domains follow at residues 29-133 (SQIR…APKF), 134-242 (QAES…APVF), 243-347 (AQRI…RPEV), 348-452 (TITS…PPAF), 453-562 (SQAS…APEI), and 570-683 (DGST…IPAD). The Extracellular segment spans residues 29–692 (SQIRYSVPEE…DLEASDLTLY (664 aa)). Residues Asn-47 and Asn-127 are each glycosylated (N-linked (GlcNAc...) asparagine). N-linked (GlcNAc...) asparagine glycosylation is found at Asn-389, Asn-419, and Asn-545. A helical membrane pass occupies residues 693 to 713 (LVVAVAVVSCVFLTFVITLLA). The Cytoplasmic portion of the chain corresponds to 714–932 (LRLRHWHSSH…KKKSGKKEKK (219 aa)). Disordered stretches follow at residues 803 to 841 (DTPLVPQAPPNTDWRFSQAQRPGTSGSQNGDDTGTWPNN) and 902 to 932 (ATLTNAAGKRDGKAPAGGNGNKKKSGKKEKK). The segment covering 816 to 841 (WRFSQAQRPGTSGSQNGDDTGTWPNN) has biased composition (polar residues). The segment covering 922 to 932 (NKKKSGKKEKK) has biased composition (basic residues).

Its subcellular location is the cell membrane. Functionally, potential calcium-dependent cell-adhesion protein. May be involved in the establishment and maintenance of specific neuronal connections in the brain. This is Protocadherin gamma-A9 (PCDHGA9) from Homo sapiens (Human).